The sequence spans 261 residues: MNYIQAIILAIIEGITEFLPVSSTGHMIIASSFFGIAHEDFTKLFTIVIQLGAILSVVVLYFKRFFQTLDFYFKLLVAFIPAVVLGLLFSKKIDALLESPVTVAVSLLVGGIILLKVDDWFNNSSETEITYLKAFKIGLFQCIAMIPGVSRSGASIVGGMSQKLARTSAAEFSFFLAVPTMLGATLKKCYDYYKDGFILTHDQINILIIGNIVAFLVALLAIKTFIGFLSKNGFKVFGYYRIVAGIVLLLIHFFIHPLTLI.

The next 8 membrane-spanning stretches (helical) occupy residues 1 to 21 (MNYI…FLPV), 41 to 61 (FTKL…VVLY), 69 to 89 (LDFY…GLLF), 95 to 115 (ALLE…IILL), 129 to 149 (ITYL…IPGV), 169 to 186 (AAEF…GATL), 206 to 226 (ILII…KTFI), and 241 to 261 (RIVA…LTLI).

This sequence belongs to the UppP family.

The protein localises to the cell inner membrane. It catalyses the reaction di-trans,octa-cis-undecaprenyl diphosphate + H2O = di-trans,octa-cis-undecaprenyl phosphate + phosphate + H(+). In terms of biological role, catalyzes the dephosphorylation of undecaprenyl diphosphate (UPP). Confers resistance to bacitracin. This Flavobacterium psychrophilum (strain ATCC 49511 / DSM 21280 / CIP 103535 / JIP02/86) protein is Undecaprenyl-diphosphatase.